A 673-amino-acid polypeptide reads, in one-letter code: UvrABC system protein B (673 aa).

Residues 30–417 (NSILLGNKYQ…SSVVVDQIIR (388 aa)) enclose the Helicase ATP-binding domain. 43–50 (GVTGSGKT) provides a ligand contact to ATP. Positions 96-119 (YYDYYQPESYVPSKDLFIEKEATI) match the Beta-hairpin motif. A Helicase C-terminal domain is found at 434-600 (QMEDLYSEIQ…TIVKKIQNIL (167 aa)). Residues 627 to 662 (KKLIDKLKFDLEEAVNDERFEDAIVLRDKIKELSSK) form the UVR domain.

Belongs to the UvrB family. Forms a heterotetramer with UvrA during the search for lesions. Interacts with UvrC in an incision complex.

The protein resides in the cytoplasm. Its function is as follows. The UvrABC repair system catalyzes the recognition and processing of DNA lesions. A damage recognition complex composed of 2 UvrA and 2 UvrB subunits scans DNA for abnormalities. Upon binding of the UvrA(2)B(2) complex to a putative damaged site, the DNA wraps around one UvrB monomer. DNA wrap is dependent on ATP binding by UvrB and probably causes local melting of the DNA helix, facilitating insertion of UvrB beta-hairpin between the DNA strands. Then UvrB probes one DNA strand for the presence of a lesion. If a lesion is found the UvrA subunits dissociate and the UvrB-DNA preincision complex is formed. This complex is subsequently bound by UvrC and the second UvrB is released. If no lesion is found, the DNA wraps around the other UvrB subunit that will check the other stand for damage. The polypeptide is UvrABC system protein B (Borreliella burgdorferi (strain ATCC 35210 / DSM 4680 / CIP 102532 / B31) (Borrelia burgdorferi)).